The sequence spans 218 residues: Glutathione S-transferase class-mu 26 kDa isozyme 51 (218 aa).

A GST N-terminal domain is found at 2–83; the sequence is PAKLGYWKIR…YIADKHGMLG (82 aa). Glutathione contacts are provided by residues 7 to 8, 41 to 45, 54 to 55, and 67 to 68; these read YW, WFGDK, NL, and QS. The GST C-terminal domain occupies 85–203; sequence TPEERARISM…ESEKFIKWPL (119 aa). Tyr111 contributes to the substrate binding site.

This sequence belongs to the GST superfamily. Mu family. As to quaternary structure, homodimer.

Its subcellular location is the cytoplasm. The enzyme catalyses RX + glutathione = an S-substituted glutathione + a halide anion + H(+). Its function is as follows. Conjugation of reduced glutathione to a wide number of exogenous and endogenous hydrophobic electrophiles. GST isoenzymes appear to play a central role in the parasite detoxification system. Other functions are also suspected including a role in increasing the solubility of haematin in the parasite gut. The chain is Glutathione S-transferase class-mu 26 kDa isozyme 51 from Fasciola hepatica (Liver fluke).